The following is a 364-amino-acid chain: MKKLAISIGDINSIGLEILVRSHEELSKICTPFYFIHESLLNKALKLLNLKLFNAKIVAFKDDKDYEFNFIKKENSLEIYSFCLPLGFKVDENFEIQAGEIDAKSGLYGFLSFKAASYFVYEKHAHALLTLPIHKKAWEDAGLKYKGHTDALRDFFKKNAIMMLGCKELFVGLFSEHIPLAKVSKKITFKNLSIFLKDFYKETHFKKMGLLGFNPHAGDYGVIGGEEEKIMEKAIAFVNAFLHSKKDEKFFKKALKDENLQKELLLNFKGKGVYLPYPLVADTAFTKTGLKNCNRLVAMYHDLALAPLKALYFDKSINVSLNLPIIRVSVDHGTAFDKAYKNAKINTKSYFEAAKFAINLHSKA.

Residues His148 and Thr149 each contribute to the substrate site. Residues His177, His216, and His301 each contribute to the a divalent metal cation site. Residues Lys309, Asn318, and Arg327 each contribute to the substrate site.

The protein belongs to the PdxA family. Homodimer. Requires Zn(2+) as cofactor. Mg(2+) serves as cofactor. The cofactor is Co(2+).

Its subcellular location is the cytoplasm. The catalysed reaction is 4-(phosphooxy)-L-threonine + NAD(+) = 3-amino-2-oxopropyl phosphate + CO2 + NADH. The protein operates within cofactor biosynthesis; pyridoxine 5'-phosphate biosynthesis; pyridoxine 5'-phosphate from D-erythrose 4-phosphate: step 4/5. Catalyzes the NAD(P)-dependent oxidation of 4-(phosphooxy)-L-threonine (HTP) into 2-amino-3-oxo-4-(phosphooxy)butyric acid which spontaneously decarboxylates to form 3-amino-2-oxopropyl phosphate (AHAP). This chain is 4-hydroxythreonine-4-phosphate dehydrogenase, found in Campylobacter jejuni subsp. jejuni serotype O:2 (strain ATCC 700819 / NCTC 11168).